The chain runs to 611 residues: Dihydroxy-acid dehydratase (611 aa).

D81 contributes to the Mg(2+) binding site. [2Fe-2S] cluster is bound at residue C122. 2 residues coordinate Mg(2+): D123 and K124. K124 is modified (N6-carboxylysine). A [2Fe-2S] cluster-binding site is contributed by C195. E491 is a Mg(2+) binding site. S517 (proton acceptor) is an active-site residue.

It belongs to the IlvD/Edd family. Homodimer. [2Fe-2S] cluster is required as a cofactor. Requires Mg(2+) as cofactor.

It catalyses the reaction (2R)-2,3-dihydroxy-3-methylbutanoate = 3-methyl-2-oxobutanoate + H2O. The catalysed reaction is (2R,3R)-2,3-dihydroxy-3-methylpentanoate = (S)-3-methyl-2-oxopentanoate + H2O. It participates in amino-acid biosynthesis; L-isoleucine biosynthesis; L-isoleucine from 2-oxobutanoate: step 3/4. It functions in the pathway amino-acid biosynthesis; L-valine biosynthesis; L-valine from pyruvate: step 3/4. Functions in the biosynthesis of branched-chain amino acids. Catalyzes the dehydration of (2R,3R)-2,3-dihydroxy-3-methylpentanoate (2,3-dihydroxy-3-methylvalerate) into 2-oxo-3-methylpentanoate (2-oxo-3-methylvalerate) and of (2R)-2,3-dihydroxy-3-methylbutanoate (2,3-dihydroxyisovalerate) into 2-oxo-3-methylbutanoate (2-oxoisovalerate), the penultimate precursor to L-isoleucine and L-valine, respectively. The protein is Dihydroxy-acid dehydratase of Pasteurella multocida (strain Pm70).